The chain runs to 475 residues: Solute carrier family 46 member 2 (475 aa).

The Cytoplasmic portion of the chain corresponds to 1–23 (MSPEVTCPRRGHLPRFHPRTWVE). The helical transmembrane segment at 24-44 (PVVASSQVAASLYDAGLLLVV) threads the bilayer. At 45–78 (KASYGTGGSSNHSASPSPRGALEDQQQRAISNFY) the chain is on the extracellular side. N55 is a glycosylation site (N-linked (GlcNAc...) asparagine). Residues 79–99 (IIYNLVVGLSPLLSAYGLGWL) form a helical membrane-spanning segment. The Cytoplasmic portion of the chain corresponds to 100 to 108 (SDRYHRKIS). The helical transmembrane segment at 109-129 (ICMSLLGFLLSRLGLLLKVLL) threads the bilayer. Residues 130–138 (DWPVEVLYG) lie on the Extracellular side of the membrane. The chain crosses the membrane as a helical span at residues 139-159 (AAALNGLFGGFSAFWSGVMAL). The Cytoplasmic segment spans residues 160-172 (GSLGSSEGRRSVR). Residues 173–193 (LILIDLMLGLAGFCGSMASGH) form a helical membrane-spanning segment. At 194 to 205 (LFKQMAGHSGQG) the chain is on the extracellular side. The helical transmembrane segment at 206–226 (LILTACSVSCASFALLYSLLV) threads the bilayer. The Cytoplasmic portion of the chain corresponds to 227 to 282 (LKVPESVAKPSQELPAVDTVSGTVGTYRTLDPDQLDQQYAVGHPPSPGKAKPHKTT). The helical transmembrane segment at 283–303 (IALLFVGAIIYDLAVVGTVDV) threads the bilayer. At 304–320 (IPLFVLREPLGWNQVQV) the chain is on the extracellular side. A helical membrane pass occupies residues 321–341 (GYGMAAGYTIFITSFLGVLVF). Topologically, residues 342–347 (SRCFRD) are cytoplasmic. A helical membrane pass occupies residues 348 to 368 (TTMIMIGMVSFGSGALLLAFV). Residues 369-370 (KE) lie on the Extracellular side of the membrane. Residues 371-391 (TYMFYIARAVMLFALIPVTTI) traverse the membrane as a helical segment. Residues 392 to 406 (RSAMSKLIKGSSYGK) are Cytoplasmic-facing. A helical membrane pass occupies residues 407-427 (VFVILQLSLALTGVVTSTLYN). The Extracellular segment spans residues 428 to 435 (KIYQLTMD). The chain crosses the membrane as a helical span at residues 436-456 (MFVGSCFALSSFLSFLAIIPI). At 457–475 (SIVAYKQVPLSPYGDIIEK) the chain is on the cytoplasmic side.

It belongs to the major facilitator superfamily. SLC46A family. Post-translationally, glycosylated. In terms of tissue distribution, strongly expressed in the adult thymus. Expressed in spleen, lymph nodes, thymus, PBL, bone marrow and fetal liver. Expressed in monocytes and pre-dendridic cells.

It is found in the endosome membrane. The protein localises to the cell membrane. It catalyses the reaction N-acetyl-beta-D-glucosaminyl-(1-&gt;4)-1,6-anhydro-N-acetyl-beta-D-muramoyl-L-alanyl-gamma-D-glutamyl-meso-2,6-diaminopimeloyl-D-alanine(out) + n H(+)(out) = N-acetyl-beta-D-glucosaminyl-(1-&gt;4)-1,6-anhydro-N-acetyl-beta-D-muramoyl-L-alanyl-gamma-D-glutamyl-meso-2,6-diaminopimeloyl-D-alanine(in) + n H(+)(in). The catalysed reaction is L-alanyl-gamma-D-glutamyl-meso-2,6-diaminopimelate(out) + n H(+)(out) = L-alanyl-gamma-D-glutamyl-meso-2,6-diaminopimelate(in) + n H(+)(in). The enzyme catalyses N-acetyl-D-muramoyl-L-alanyl-D-isoglutamine(out) + n H(+)(out) = N-acetyl-D-muramoyl-L-alanyl-D-isoglutamine(in) + n H(+)(in). It carries out the reaction 2',3'-cGAMP(out) + n H(+)(out) = 2',3'-cGAMP(in) + n H(+)(in). It catalyses the reaction 3',3'-cGAMP(out) + n H(+)(out) = 3',3'-cGAMP(in) + n H(+)(in). Its function is as follows. Proton-coupled transporter that delivers pathogen-associated or danger-associated molecular patterns to cytosolic pattern recognition receptors as part of the innate immune response to microbes or tissue injury. Has selectivity toward muropeptides that contain the amino acid diaminopimelic acid (DAP-type peptidoglycan muropeptides) including Tri-DAP and tracheal toxin (TCT), common in Gram-negative bacteria and Gram-positive bacilli. In the context of immune recognition of skin microbiota, shuttles bacterial muropeptides across the endolysosomal membranes into the cytosol for recognition by NOD1, triggering MYD88-dependent secretion of IL1A and neutrophil recruitment in a pyroptosis-type inflammatory process. To a lesser extent and redundantly, transports muramyl dipeptides derived from most bacterial proteoglycans, eliciting NOD2 receptor activation and downstream inflammatory responses. Postulated to function as a dominant importer of cyclic GMP-AMP dinucleotides (cGAMPs) in monocyte and macrophage cell lineages. Selectively imports cGAMPs derived from pathogenic bacteria such as 3'3'-cGAMP thus providing for differential immune recognition of pathogenic versus commensal bacteria. During tumorigenesis may transport extracellular tumor-derived 2'3'-cGAMP across the plasma membrane of M1-polarized macrophages to activate the anti-tumoral stimulator of interferon genes (STING) pathway. The transport mechanism, its electrogenicity and stoichiometry remain to be elucidated. The polypeptide is Solute carrier family 46 member 2 (Homo sapiens (Human)).